Here is a 46-residue protein sequence, read N- to C-terminus: Small polypeptide DEVIL 5 (46 aa).

The helical transmembrane segment at 8–24 (VGGTKRKMWSRGVGGVV) threads the bilayer. Residues 15–46 (MWSRGVGGVVREQKAKLYIIRRCVVMLLCWHD) form a required for DVL/RTFL small polypeptide activity region.

This sequence belongs to the DVL/RTFL small polypeptides family. As to expression, mostly expressed in roots and flowers, and, to a lower extent, in leaves and stems.

The protein resides in the cell membrane. In terms of biological role, small polypeptide acting as a regulatory molecule which coordinates cellular responses required for differentiation, growth and development, including leaves shape, pedicule elongation, inflorescence organization and fruit maturation, probably by restricting polar cell proliferation in lateral organs and coordinating socket cell recruitment and differentiation at trichome sites. The sequence is that of Small polypeptide DEVIL 5 from Arabidopsis thaliana (Mouse-ear cress).